Here is a 152-residue protein sequence, read N- to C-terminus: Chemokine-like factor (152 aa).

The region spanning 13 to 133 is the MARVEL domain; it reads FCFSVKGHVK…DGALIYRKLL (121 aa). 3 consecutive transmembrane segments (helical) span residues 45–65, 81–101, and 108–128; these read YIVI…LYVL, IINS…ALIP, and VGGG…GALI.

This sequence belongs to the chemokine-like factor family. As to expression, isoform 1, isoform 2, isoform 3 and isoform 4 have highest expression levels in adult spleen, lung, testis, ovary, peripheral blood leukocyte, placenta, pancreas, and in fetal brain, skeletal muscle, thymus and heart. Lower expression levels in adult skeletal muscle, liver, thymus colon, prostate and fetal spleen and liver.

The protein localises to the secreted. It is found in the membrane. Partly inhibited by interleukin 10. Its function is as follows. May play an important role in inflammation and regeneration of skeletal muscle. Essential for embryonic development. In terms of biological role, has chemotactic response in monocytes, neutrophils and lymphocytes. Binds CCR4. The protein is Chemokine-like factor (CKLF) of Homo sapiens (Human).